Reading from the N-terminus, the 126-residue chain is UPF0102 protein Cphamn1_0017 (126 aa).

Belongs to the UPF0102 family.

The chain is UPF0102 protein Cphamn1_0017 from Chlorobium phaeobacteroides (strain BS1).